The following is a 495-amino-acid chain: Ankyrin repeat domain-containing protein 34A (495 aa).

ANK repeat units follow at residues 4–33 (TEGHALLRAVGQGKLRLARLLLEGGAYVNE), 37–72 (QGETALMAACRARYDDPQNKARMVRYLLEQGADPNI), 76–106 (LGRTALMHACAGGGGAAVASLLLAHGADPSV), and 110–139 (AGASALVHALDRGDRETLATLLDACKAKGT). The residue at position 15 (Gln15) is an N5-methylglutamine. Polar residues-rich tracts occupy residues 147–162 (DTSPSGTKKTRQYLNS) and 180–191 (VCTSPSEVQLQT). Residues 147-495 (DTSPSGTKKT…SLGGPGEPGR (349 aa)) are disordered. Over residues 203-213 (AQEEEEKRDVF) the composition is skewed to basic and acidic residues. The segment covering 223–232 (DPSPSEPLPK) has biased composition (pro residues). Positions 233-242 (PPRHPPKPLK) are enriched in basic residues. Thr315 is modified (phosphothreonine). The span at 375–385 (SVSSPRQSQES) shows a compositional bias: polar residues. A compositionally biased stretch (basic residues) spans 462 to 472 (RTKRKLVRRHS). A compositionally biased stretch (gly residues) spans 485–495 (QSLGGPGEPGR).

This sequence belongs to the ANKRD34 family. Post-translationally, methylated at Gln-15 by N6AMT1.

The chain is Ankyrin repeat domain-containing protein 34A (Ankrd34a) from Rattus norvegicus (Rat).